We begin with the raw amino-acid sequence, 370 residues long: DNA replication and repair protein RecF (370 aa).

30–37 (GQNGMGKT) is an ATP binding site.

The protein belongs to the RecF family.

It is found in the cytoplasm. Its function is as follows. The RecF protein is involved in DNA metabolism; it is required for DNA replication and normal SOS inducibility. RecF binds preferentially to single-stranded, linear DNA. It also seems to bind ATP. The polypeptide is DNA replication and repair protein RecF (Bacteroides fragilis (strain YCH46)).